The chain runs to 250 residues: Probable transcriptional regulatory protein Rxyl_1318 (250 aa).

This sequence belongs to the TACO1 family.

It localises to the cytoplasm. The polypeptide is Probable transcriptional regulatory protein Rxyl_1318 (Rubrobacter xylanophilus (strain DSM 9941 / JCM 11954 / NBRC 16129 / PRD-1)).